Here is a 397-residue protein sequence, read N- to C-terminus: Iron-sulfur cluster assembly SufBD family protein Rv1462 (397 aa).

Thr2 bears the N-acetylthreonine mark.

It belongs to the iron-sulfur cluster assembly SufBD family.

The polypeptide is Iron-sulfur cluster assembly SufBD family protein Rv1462 (Mycobacterium tuberculosis (strain ATCC 25618 / H37Rv)).